The primary structure comprises 130 residues: Small ribosomal subunit protein uS11 (130 aa).

Belongs to the universal ribosomal protein uS11 family. As to quaternary structure, part of the 30S ribosomal subunit. Interacts with proteins S7 and S18. Binds to IF-3.

Its function is as follows. Located on the platform of the 30S subunit, it bridges several disparate RNA helices of the 16S rRNA. Forms part of the Shine-Dalgarno cleft in the 70S ribosome. In Gloeobacter violaceus (strain ATCC 29082 / PCC 7421), this protein is Small ribosomal subunit protein uS11.